The sequence spans 144 residues: Small ribosomal subunit protein bS6 (144 aa).

The segment at 95 to 144 (ELEEGPSAMMQSKSRDDRPRRGEGDDRPRRDDREDRPRRDREPRRMEGGE) is disordered. The span at 107 to 144 (KSRDDRPRRGEGDDRPRRDDREDRPRRDREPRRMEGGE) shows a compositional bias: basic and acidic residues.

This sequence belongs to the bacterial ribosomal protein bS6 family.

In terms of biological role, binds together with bS18 to 16S ribosomal RNA. The protein is Small ribosomal subunit protein bS6 of Paramagnetospirillum magneticum (strain ATCC 700264 / AMB-1) (Magnetospirillum magneticum).